Reading from the N-terminus, the 202-residue chain is NADH-quinone oxidoreductase subunit C (202 aa).

It belongs to the complex I 30 kDa subunit family. NDH-1 is composed of 14 different subunits. Subunits NuoB, C, D, E, F, and G constitute the peripheral sector of the complex.

The protein localises to the cell inner membrane. The catalysed reaction is a quinone + NADH + 5 H(+)(in) = a quinol + NAD(+) + 4 H(+)(out). Its function is as follows. NDH-1 shuttles electrons from NADH, via FMN and iron-sulfur (Fe-S) centers, to quinones in the respiratory chain. The immediate electron acceptor for the enzyme in this species is believed to be ubiquinone. Couples the redox reaction to proton translocation (for every two electrons transferred, four hydrogen ions are translocated across the cytoplasmic membrane), and thus conserves the redox energy in a proton gradient. This is NADH-quinone oxidoreductase subunit C from Brucella canis (strain ATCC 23365 / NCTC 10854 / RM-666).